A 1272-amino-acid chain; its full sequence is MFNKDLTIDNLFTEDVIIDPTKTQFSKTFQNDIELDTKEIRWIFYADMEMHGRKGVDIAFPTRFEVMKTLKINKYSFLTGNDFSSGMGIIMEISRNTITLHIPKEPCFKNITFLTMGYGSGSQMTLAGPKPKLEFNNPAVVAWINSILSYLPGVENSIFEKGGDYFPNSNDERVAYTIWDRMDRIEFLDEIEKAELKKRRKEGNLTIEEAVNIEIKSAVNFYTNFSNQGVLQNTPYGYLTALLSFKNSAEEKEKKLRLSKKKEQLEKIQEYLDANQFENALKMLGEESIAKDSLKRYYKIVTDDLVYGGLNDYINVVFEKYEELEKIQADTHTQIKNELEESVYIFINTLQMRGSDNLASKKNALESYDSQFYLTGEMLGKTAANMINKQNKTSADRKIIEKKTARTSVTFNSIMERRQAMDRINQKIIDREGAIRQSMLVKERLLIAASDIDDIPIDGIHYVYNQEESELLASAQRLNLTVGEESLNLVEVLVSRLNRGMPNKFLEITEEFIEYLKLIMGELSFVVTGTHFDWPEINNLITFNVMASDEVPWRSIDEMKDMLELTKSLDIVFPFDKRFAATKNEELNISEFLNSYPGFSLPSVKAALGKDLEKLIKLVNDHDQEIQKIYKEVEKLNTVILKAVTDGTRTENINDVGGVVKRLDAVAKSGFSKEVTGWKLLEYICDYYSNLSLPPSFNILRRMTDTERGLFTYFTTRYAGKIEIFEEEDRVYEVLLEKIHSQTMLDLVKDNKEKAIKKIKDFILHHCKEYKGEFESTNTTAYMNRLEIIKIEDPGFAEISRGMMAGVDDKFFPALDELLKKWRRTDMEGYVHGVLNQGIGDILALTEIKKNVKEPEVVFETTAINLIKKLAAITKPYDVDAFKINEVDYDIMDSLLTGIFLNKYLAFIPIAELSKDRYLAANVSEVKLNNYTVVTFEDLLAQSARRRGDDGDVAMMTSDTKKQAIDFAIEKLKKHDINTIPIMMFYEFINDRFKKRLSDVNFNRNTLTDEGTPLRIIMDGNTFRQMPVYIYDDLLRKKNIGAQNTIGQALTLTRIVNLVPYEETLMVNDPTETSTDLEWDPLIQSTPSGLSFYDDDIPRPTNLPGLEALRTPSIFSEINVITPGFIQQPPPTDPALALQFLTNRTEVQNLLNEYEVSTPGPTDTQDMFVISDTLAPIPELPETSQQPVVPTPPATRPSSPIPPESDILTEEEQLEEQPPRQQQATRKTTTTVSIEAEDFIAYLRLKTLEQQMVDELKSILPPDTEEEEEEEE.

Coiled coils occupy residues 185–212 (IEFL…EAVN), 246–274 (KNSA…YLDA), and 607–640 (ALGK…NTVI). Residues 1179-1231 (ELPETSQQPVVPTPPATRPSSPIPPESDILTEEEQLEEQPPRQQQATRKTTTT) are disordered. Pro residues predominate over residues 1189 to 1203 (VPTPPATRPSSPIPP). The span at 1219–1231 (PRQQQATRKTTTT) shows a compositional bias: low complexity.

This is an uncharacterized protein from Magallana gigas (Pacific oyster).